The chain runs to 293 residues: Putative DNA glycosylase At3g47830 (293 aa).

Positions 1–10 (MSKAQKRKRL) are enriched in basic residues. Positions 1 to 34 (MSKAQKRKRLNKYDGESKTPANKSTVDGGNPYPT) are disordered. Residues Asn108 and Lys151 each coordinate DNA. Catalysis depends on Lys196, which acts as the Schiff-base intermediate with DNA. His216 and Asp232 together coordinate DNA.

The protein belongs to the DNA glycosylase family.

The protein is Putative DNA glycosylase At3g47830 of Arabidopsis thaliana (Mouse-ear cress).